A 274-amino-acid chain; its full sequence is SPbeta prophage-derived UPF0714 protein YoqZ (274 aa).

It belongs to the UPF0714 family.

This Bacillus subtilis (strain 168) protein is SPbeta prophage-derived UPF0714 protein YoqZ (yoqZ).